Reading from the N-terminus, the 247-residue chain is Adenosylcobinamide-GDP ribazoletransferase (247 aa).

5 helical membrane-spanning segments follow: residues 34 to 54 (IITF…VFMV), 59 to 79 (CGVP…TGGF), 113 to 133 (GGLA…ELTL), 138 to 158 (ILAS…LLMY), and 194 to 214 (VLLP…AIFI).

The protein belongs to the CobS family. It depends on Mg(2+) as a cofactor.

The protein localises to the cell inner membrane. The catalysed reaction is alpha-ribazole + adenosylcob(III)inamide-GDP = adenosylcob(III)alamin + GMP + H(+). It carries out the reaction alpha-ribazole 5'-phosphate + adenosylcob(III)inamide-GDP = adenosylcob(III)alamin 5'-phosphate + GMP + H(+). It participates in cofactor biosynthesis; adenosylcobalamin biosynthesis; adenosylcobalamin from cob(II)yrinate a,c-diamide: step 7/7. Its function is as follows. Joins adenosylcobinamide-GDP and alpha-ribazole to generate adenosylcobalamin (Ado-cobalamin). Also synthesizes adenosylcobalamin 5'-phosphate from adenosylcobinamide-GDP and alpha-ribazole 5'-phosphate. The chain is Adenosylcobinamide-GDP ribazoletransferase from Escherichia coli O127:H6 (strain E2348/69 / EPEC).